The following is a 110-amino-acid chain: Nucleoid-associated protein SYO3AOP1_1366 (110 aa).

This sequence belongs to the YbaB/EbfC family. As to quaternary structure, homodimer.

The protein resides in the cytoplasm. It is found in the nucleoid. Its function is as follows. Binds to DNA and alters its conformation. May be involved in regulation of gene expression, nucleoid organization and DNA protection. In Sulfurihydrogenibium sp. (strain YO3AOP1), this protein is Nucleoid-associated protein SYO3AOP1_1366.